A 196-amino-acid chain; its full sequence is MLDCRAVIMLWLLPWVTQGLAVPRSSSPDWAQCQQLSRNLCMLAWNAHAPAGHMNLLREEEDEETKNNVPRIQCEDGCDPQGLKDNSQFCLQRIRQGLAFYKHLLDSDIFKGEPALLPDSPMEQLHTSLLGLSQLLQPEDHPRETQQMPSLSSSQQWQRPLLRSKILRSLQAFLAIAARVFAHGAATLTEPLVPTA.

The signal sequence occupies residues 1-21; it reads MLDCRAVIMLWLLPWVTQGLA.

This sequence belongs to the IL-6 superfamily. As to quaternary structure, heterodimer with IL12B; disulfide-linked. The heterodimer is known as interleukin IL-23. Interacts with IL23R; this interaction enables recruitment of IL12RB1. In terms of tissue distribution, secreted by activated dendritic cells (at protein level). Detected in various tissues with higher expression in polarized Th1 cells and activated macrophages.

The protein localises to the secreted. Associates with IL12B to form the IL-23 interleukin, a heterodimeric cytokine which functions in innate and adaptive immunity. IL-23 may constitute with IL-17 an acute response to infection in peripheral tissues. IL-23 binds to a heterodimeric receptor complex composed of IL12RB1 and IL23R, activates the Jak-Stat signaling cascade, stimulates memory rather than naive T-cells and promotes production of pro-inflammatory cytokines. IL-23 induces autoimmune inflammation and thus may be responsible for autoimmune inflammatory diseases and may be important for tumorigenesis. Its function is as follows. Associates with IL12B to form the pro-inflammatory cytokine IL-23 that plays different roles in innate and adaptive immunity. Released by antigen-presenting cells such as dendritic cells or macrophages, binds to a heterodimeric receptor complex composed of IL12RB1 and IL23R to activate JAK2 and TYK2 which then phosphorylate the receptor to form a docking site leading to the phosphorylation of STAT3 and STAT4. This process leads to activation of several pathways including p38 MAPK or NF-kappa-B and promotes the production of pro-inflammatory cytokines such as interleukin-17A/IL17A. In turn, participates in the early and effective intracellular bacterial clearance. Promotes the expansion and survival of T-helper 17 cells, a CD4-positive helper T-cell subset that produces IL-17, as well as other IL-17-producing cells. This Mus musculus (Mouse) protein is Interleukin-23 subunit alpha (Il23a).